Reading from the N-terminus, the 255-residue chain is MEDKQAKPLRILLSNDDGVFAEGIRTLASELRTLAEVIIVAPDRNRSGASNSLTLEQPLRVTCVEENVYSVQGTPTDCVHFALNELLKNDLPDLVLSGINHGANLGDDVLYSGTVAAAMEGHFLGVQSIAFSLVGKTHFKTAATIAKRIVEQHLAKPIPTNRLLNINIPDLPLEQLEEIRVTRLGARHHAENMIKQLDPRGHEIYWLGPPGKEQDAGEGTDFHTIEQGYVSITPLQVDLTAHESLRAMDTWLKEK.

Residues Asp-16, Asp-17, Ser-47, and Asn-100 each coordinate a divalent metal cation.

Belongs to the SurE nucleotidase family. Requires a divalent metal cation as cofactor.

The protein localises to the cytoplasm. It carries out the reaction a ribonucleoside 5'-phosphate + H2O = a ribonucleoside + phosphate. Nucleotidase that shows phosphatase activity on nucleoside 5'-monophosphates. This Vibrio vulnificus (strain YJ016) protein is 5'-nucleotidase SurE.